A 652-amino-acid chain; its full sequence is Phosphomethylpyrimidine synthase (652 aa).

Substrate contacts are provided by residues asparagine 257, methionine 286, tyrosine 315, histidine 351, 371 to 373 (SRG), 412 to 415 (DGLR), and glutamate 451. Histidine 455 provides a ligand contact to Zn(2+). Residue tyrosine 478 coordinates substrate. Histidine 519 contacts Zn(2+). The [4Fe-4S] cluster site is built by cysteine 599, cysteine 602, and cysteine 607.

It belongs to the ThiC family. Homodimer. It depends on [4Fe-4S] cluster as a cofactor.

The catalysed reaction is 5-amino-1-(5-phospho-beta-D-ribosyl)imidazole + S-adenosyl-L-methionine = 4-amino-2-methyl-5-(phosphooxymethyl)pyrimidine + CO + 5'-deoxyadenosine + formate + L-methionine + 3 H(+). It participates in cofactor biosynthesis; thiamine diphosphate biosynthesis. Catalyzes the synthesis of the hydroxymethylpyrimidine phosphate (HMP-P) moiety of thiamine from aminoimidazole ribotide (AIR) in a radical S-adenosyl-L-methionine (SAM)-dependent reaction. This Thiobacillus denitrificans (strain ATCC 25259 / T1) protein is Phosphomethylpyrimidine synthase.